Reading from the N-terminus, the 93-residue chain is Integration host factor subunit beta (93 aa).

Belongs to the bacterial histone-like protein family. Heterodimer of an alpha and a beta chain.

Functionally, this protein is one of the two subunits of integration host factor, a specific DNA-binding protein that functions in genetic recombination as well as in transcriptional and translational control. In Aliivibrio fischeri (strain ATCC 700601 / ES114) (Vibrio fischeri), this protein is Integration host factor subunit beta.